The primary structure comprises 597 residues: MKIEDKLVTSVISGLKALYGQDVPAAQVQLQKTKKEFEGHLTLVVFPFLKMSKKGPEQTAQEIGEYLKANEPAVAAFNVIKGFLNLTVASATWIELLNEIHTDAQYGIVSADENAPLVMIEYSSPNTNKPLHLGHVRNNLLGNALANIVMANGNKVVKTNIVNDRGIHICKSMLAWQKYGKGETPESSGKKGDHLVGDYYVAFDKHYKAEVAELMEKGMSKEEAEAASPLMNEAREMLVKWEAGDPEVRALWQMMNNWVYAGFDETYRKMGVGFDKIYYESNTYLEGKEKVMEGLEKGFFFKKEDGSVWADLTAEGLDHKLLLRGDGTSVYMTQDIGTAKLRFADYPIDKMIYVVGNEQNYHFQVLSILLDKLGFEWGKSLVHFSYGMVELPEGKMKSREGTVVDADDLMAEMIATAKETSQELGKLDGLTQEEADDIARIVGLGALKYFILKVDARKNMTFNPKESIDFNGNTGPFIQYTYARIRSVLRKAAEAGIVIPEVLPANIELSEKEEGLIQMVADFAAVVRQAGEDYSPSGIANYVYDLVKEYNQFYHDFSILREENEDVKLFRIALSANIAKVVRLGMGLLGIEVPDRM.

The 'HIGH' region motif lies at 125–135 (PNTNKPLHLGH).

The protein belongs to the class-I aminoacyl-tRNA synthetase family. In terms of assembly, monomer.

It localises to the cytoplasm. It catalyses the reaction tRNA(Arg) + L-arginine + ATP = L-arginyl-tRNA(Arg) + AMP + diphosphate. The polypeptide is Arginine--tRNA ligase (Bacteroides fragilis (strain ATCC 25285 / DSM 2151 / CCUG 4856 / JCM 11019 / LMG 10263 / NCTC 9343 / Onslow / VPI 2553 / EN-2)).